The sequence spans 553 residues: Interleukin-20 receptor subunit alpha (553 aa).

Positions 1–29 are cleaved as a signal peptide; that stretch reads MRAPGRPALRPLPLPPLLLLLLAAPWGRA. Over 30–250 the chain is Extracellular; sequence VPCVSGGLPK…KDQSSEFKAK (221 aa). Fibronectin type-III domains are found at residues 37–135 and 136–242; these read LPKP…FLET and QIGP…TLKD. N-linked (GlcNAc...) asparagine glycans are attached at residues asparagine 42, asparagine 83, asparagine 91, asparagine 182, asparagine 191, and asparagine 200. Residues cysteine 87 and cysteine 95 are joined by a disulfide bond. Cysteine 215 and cysteine 236 are joined by a disulfide. The chain crosses the membrane as a helical span at residues 251 to 271; that stretch reads IIFWYVLPVSITVFLFSVMGY. Residues 272–553 are Cytoplasmic-facing; sequence SIYRYIHVGK…EWGLYVQMEN (282 aa). 2 disordered regions span residues 333–353 and 462–515; these read SSDVSSLNDPQPSGNLRPPQE and QEHT…LGEE. Positions 334–346 are enriched in polar residues; the sequence is SDVSSLNDPQPSG. The span at 499–513 shows a compositional bias: acidic residues; that stretch reads QDSEGCEPSEGDGLG.

Belongs to the type II cytokine receptor family. In terms of assembly, heterodimer with IL20RB and heterodimer with IL10RB. As to expression, widely expressed with highest levels in skin and testis and high levels in brain. Highly expressed in psoriatic skin.

The protein localises to the membrane. Functionally, the IL20RA/IL20RB dimer is a receptor for IL19, IL20 and IL24. The IL20RA/IL10RB dimer is a receptor for IL26. The chain is Interleukin-20 receptor subunit alpha (IL20RA) from Homo sapiens (Human).